The chain runs to 274 residues: Diaminopimelate epimerase (274 aa).

Residues N11 and N76 each contribute to the substrate site. The active-site Proton donor is C85. Substrate contacts are provided by residues 86 to 87 (GN), N157, N189, and 207 to 208 (ER). C216 acts as the Proton acceptor in catalysis. Residue 217 to 218 (GT) participates in substrate binding.

Belongs to the diaminopimelate epimerase family. In terms of assembly, homodimer.

It localises to the cytoplasm. It catalyses the reaction (2S,6S)-2,6-diaminopimelate = meso-2,6-diaminopimelate. Its pathway is amino-acid biosynthesis; L-lysine biosynthesis via DAP pathway; DL-2,6-diaminopimelate from LL-2,6-diaminopimelate: step 1/1. In terms of biological role, catalyzes the stereoinversion of LL-2,6-diaminopimelate (L,L-DAP) to meso-diaminopimelate (meso-DAP), a precursor of L-lysine and an essential component of the bacterial peptidoglycan. In Thermobifida fusca (strain YX), this protein is Diaminopimelate epimerase.